Consider the following 481-residue polypeptide: Aspartyl/glutamyl-tRNA(Asn/Gln) amidotransferase subunit B (481 aa).

This sequence belongs to the GatB/GatE family. GatB subfamily. In terms of assembly, heterotrimer of A, B and C subunits.

It carries out the reaction L-glutamyl-tRNA(Gln) + L-glutamine + ATP + H2O = L-glutaminyl-tRNA(Gln) + L-glutamate + ADP + phosphate + H(+). The catalysed reaction is L-aspartyl-tRNA(Asn) + L-glutamine + ATP + H2O = L-asparaginyl-tRNA(Asn) + L-glutamate + ADP + phosphate + 2 H(+). Allows the formation of correctly charged Asn-tRNA(Asn) or Gln-tRNA(Gln) through the transamidation of misacylated Asp-tRNA(Asn) or Glu-tRNA(Gln) in organisms which lack either or both of asparaginyl-tRNA or glutaminyl-tRNA synthetases. The reaction takes place in the presence of glutamine and ATP through an activated phospho-Asp-tRNA(Asn) or phospho-Glu-tRNA(Gln). In Cellvibrio japonicus (strain Ueda107) (Pseudomonas fluorescens subsp. cellulosa), this protein is Aspartyl/glutamyl-tRNA(Asn/Gln) amidotransferase subunit B.